A 206-amino-acid polypeptide reads, in one-letter code: Small ribosomal subunit protein uS4 (206 aa).

The S4 RNA-binding domain occupies 96–156 (GRLDNVVYRM…EKAKKQSRVK (61 aa)).

This sequence belongs to the universal ribosomal protein uS4 family. Part of the 30S ribosomal subunit. Contacts protein S5. The interaction surface between S4 and S5 is involved in control of translational fidelity.

One of the primary rRNA binding proteins, it binds directly to 16S rRNA where it nucleates assembly of the body of the 30S subunit. In terms of biological role, with S5 and S12 plays an important role in translational accuracy. In Shigella flexneri, this protein is Small ribosomal subunit protein uS4.